The following is a 558-amino-acid chain: Germacrene A synthase short form (558 aa).

Mg(2+)-binding residues include aspartate 311, aspartate 315, aspartate 455, threonine 459, and glutamate 463. A DDXXD motif motif is present at residues 311 to 315 (DDTYD).

Belongs to the terpene synthase family. Requires Mg(2+) as cofactor. Expressed in roots and in green and etiolated seedlings.

The catalysed reaction is (2E,6E)-farnesyl diphosphate = (+)-(R)-germacrene A + diphosphate. Its pathway is secondary metabolite biosynthesis; terpenoid biosynthesis. Functionally, involved in sesquiterpene lactone biosynthesis. Produces exclusively (+)-germacrene A. This Cichorium intybus (Chicory) protein is Germacrene A synthase short form.